A 354-amino-acid chain; its full sequence is Clavesin-1 (354 aa).

The region spanning 118-279 (IKRALIDGFP…EFGGTLPPYD (162 aa)) is the CRAL-TRIO domain. The interval 317–354 (RECSPKPMKRSQSVVEAGTLKHEEKGENENTQPLLALD) is disordered. Positions 335–344 (TLKHEEKGEN) are enriched in basic and acidic residues. Residues 345–354 (ENTQPLLALD) are compositionally biased toward polar residues.

Forms a complex with clathrin heavy chain and gamma-adaptin. In terms of tissue distribution, expressed in brain with no expression detected in non-neuronal tissues (at protein level).

The protein resides in the golgi apparatus. Its subcellular location is the trans-Golgi network membrane. It is found in the early endosome membrane. The protein localises to the cytoplasmic vesicle. It localises to the clathrin-coated vesicle. Functionally, required for normal morphology of late endosomes and/or lysosomes in neurons. Binds phosphatidylinositol 3,5-bisphosphate (PtdIns(3,5)P2). The polypeptide is Clavesin-1 (Rattus norvegicus (Rat)).